We begin with the raw amino-acid sequence, 45 residues long: Large ribosomal subunit protein bL34 (45 aa).

Over residues 1–10 (MTKRTLEGTN) the composition is skewed to basic and acidic residues. Residues 1–27 (MTKRTLEGTNRKRKRTSGFRARMRSAT) are disordered. Residues 11–23 (RKRKRTSGFRARM) show a composition bias toward basic residues.

The protein belongs to the bacterial ribosomal protein bL34 family.

This chain is Large ribosomal subunit protein bL34, found in Synechococcus elongatus (strain ATCC 33912 / PCC 7942 / FACHB-805) (Anacystis nidulans R2).